A 31-amino-acid chain; its full sequence is Spectrin beta chain, non-erythrocytic 1 (31 aa).

Spectrin repeat units follow at residues 1-10, 11-19, and 20-31; these read VLLLSQDYGK, YKEVAELTR, and TQILAASYELHK. Tyr-27 is subject to Phosphotyrosine.

Belongs to the spectrin family. Interacts with ANK2. Interacts with CPNE4 (via VWFA domain). Like erythrocyte spectrin, the spectrin-like proteins are capable to form dimers which can further associate to tetramers. Associates with the gamma-tubulin complex in brain, but not in kidney, liver, sperm, or uterus. Interacts with CAMSAP1. Can form heterodimers with SPTAN1.

The protein resides in the cytoplasm. It localises to the cytoskeleton. It is found in the myofibril. Its subcellular location is the sarcomere. The protein localises to the m line. The protein resides in the cytosol. It localises to the cell membrane. Functionally, fodrin, which seems to be involved in secretion, interacts with calmodulin in a calcium-dependent manner and is thus candidate for the calcium-dependent movement of the cytoskeleton at the membrane. Plays a critical role in central nervous system development and function. The chain is Spectrin beta chain, non-erythrocytic 1 (SPTBN1) from Capra hircus (Goat).